Consider the following 278-residue polypeptide: Shikimate dehydrogenase (NADP(+)) (278 aa).

Shikimate-binding positions include 18–20 (SRS) and T65. The Proton acceptor role is filled by K69. An NADP(+)-binding site is contributed by E80. Residues N89 and D104 each contribute to the shikimate site. Residues 129–133 (GAGGS) and L218 contribute to the NADP(+) site. Y220 serves as a coordination point for shikimate. Position 241 (G241) interacts with NADP(+).

It belongs to the shikimate dehydrogenase family. As to quaternary structure, homodimer.

The catalysed reaction is shikimate + NADP(+) = 3-dehydroshikimate + NADPH + H(+). Its pathway is metabolic intermediate biosynthesis; chorismate biosynthesis; chorismate from D-erythrose 4-phosphate and phosphoenolpyruvate: step 4/7. Involved in the biosynthesis of the chorismate, which leads to the biosynthesis of aromatic amino acids. Catalyzes the reversible NADPH linked reduction of 3-dehydroshikimate (DHSA) to yield shikimate (SA). The sequence is that of Shikimate dehydrogenase (NADP(+)) from Rhodopseudomonas palustris (strain ATCC BAA-98 / CGA009).